The sequence spans 107 residues: Putative double-stranded DNA mimic protein HSM_1473 (107 aa).

This sequence belongs to the putative dsDNA mimic protein family.

In terms of biological role, may act as a double-stranded DNA (dsDNA) mimic. Probably regulates the activity of a dsDNA-binding protein. The sequence is that of Putative double-stranded DNA mimic protein HSM_1473 from Histophilus somni (strain 2336) (Haemophilus somnus).